Reading from the N-terminus, the 286-residue chain is Bifunctional protein FolD (286 aa).

Residues 165–167 (GRS), S190, and V231 contribute to the NADP(+) site.

Belongs to the tetrahydrofolate dehydrogenase/cyclohydrolase family. As to quaternary structure, homodimer.

The catalysed reaction is (6R)-5,10-methylene-5,6,7,8-tetrahydrofolate + NADP(+) = (6R)-5,10-methenyltetrahydrofolate + NADPH. The enzyme catalyses (6R)-5,10-methenyltetrahydrofolate + H2O = (6R)-10-formyltetrahydrofolate + H(+). It functions in the pathway one-carbon metabolism; tetrahydrofolate interconversion. In terms of biological role, catalyzes the oxidation of 5,10-methylenetetrahydrofolate to 5,10-methenyltetrahydrofolate and then the hydrolysis of 5,10-methenyltetrahydrofolate to 10-formyltetrahydrofolate. The protein is Bifunctional protein FolD of Bacillus cereus (strain AH187).